The primary structure comprises 252 residues: Imidazole glycerol phosphate synthase subunit HisF (252 aa).

Active-site residues include Asp11 and Asp130.

This sequence belongs to the HisA/HisF family. As to quaternary structure, heterodimer of HisH and HisF.

The protein localises to the cytoplasm. It catalyses the reaction 5-[(5-phospho-1-deoxy-D-ribulos-1-ylimino)methylamino]-1-(5-phospho-beta-D-ribosyl)imidazole-4-carboxamide + L-glutamine = D-erythro-1-(imidazol-4-yl)glycerol 3-phosphate + 5-amino-1-(5-phospho-beta-D-ribosyl)imidazole-4-carboxamide + L-glutamate + H(+). Its pathway is amino-acid biosynthesis; L-histidine biosynthesis; L-histidine from 5-phospho-alpha-D-ribose 1-diphosphate: step 5/9. In terms of biological role, IGPS catalyzes the conversion of PRFAR and glutamine to IGP, AICAR and glutamate. The HisF subunit catalyzes the cyclization activity that produces IGP and AICAR from PRFAR using the ammonia provided by the HisH subunit. The sequence is that of Imidazole glycerol phosphate synthase subunit HisF from Staphylococcus aureus (strain MRSA252).